Reading from the N-terminus, the 172-residue chain is MADVQERLKKLGASARIGYVLVNFFFSQASIGSRWKTGKGTPRRKMKRAPARSGGDDKKLQQTLKKLNVQPIQAIEEVNMFKSDGNVIHFAAPKVHAAVPANTFAIYGNGEDKELTELVPGILNQLGPDSLASLRKLAESYQNMQKADGDKEADDDDIPDLVAGENFEDKVE.

Disordered regions lie at residues 36–58 (KTGK…GDDK) and 142–172 (QNMQ…DKVE). Basic residues predominate over residues 41–50 (TPRRKMKRAP). Residues 54–119 (GGDDKKLQQT…GEDKELTELV (66 aa)) enclose the NAC-A/B domain.

It belongs to the NAC-beta family. As to quaternary structure, part of the nascent polypeptide-associated complex (NAC), consisting of EGD2 and EGD1. NAC associates with ribosomes via EGD1.

It localises to the cytoplasm. The protein resides in the nucleus. In terms of biological role, component of the nascent polypeptide-associated complex (NAC), a dynamic component of the ribosomal exit tunnel, protecting the emerging polypeptides from interaction with other cytoplasmic proteins to ensure appropriate nascent protein targeting. The NAC complex also promotes mitochondrial protein import by enhancing productive ribosome interactions with the outer mitochondrial membrane and blocks the inappropriate interaction of ribosomes translating non-secretory nascent polypeptides with translocation sites in the membrane of the endoplasmic reticulum. EGD1 may act as a transcription factor that exert a negative effect on the expression of several genes that are transcribed by RNA polymerase II. In Pyricularia oryzae (strain 70-15 / ATCC MYA-4617 / FGSC 8958) (Rice blast fungus), this protein is Nascent polypeptide-associated complex subunit beta (EGD1).